The chain runs to 639 residues: 1,4-alpha-glucan branching enzyme GlgB (639 aa).

Aspartate 313 (nucleophile) is an active-site residue. Catalysis depends on glutamate 366, which acts as the Proton donor.

This sequence belongs to the glycosyl hydrolase 13 family. GlgB subfamily. As to quaternary structure, monomer.

The enzyme catalyses Transfers a segment of a (1-&gt;4)-alpha-D-glucan chain to a primary hydroxy group in a similar glucan chain.. The protein operates within glycan biosynthesis; glycogen biosynthesis. In terms of biological role, catalyzes the formation of the alpha-1,6-glucosidic linkages in glycogen by scission of a 1,4-alpha-linked oligosaccharide from growing alpha-1,4-glucan chains and the subsequent attachment of the oligosaccharide to the alpha-1,6 position. This is 1,4-alpha-glucan branching enzyme GlgB (glgB) from Butyrivibrio fibrisolvens.